The chain runs to 312 residues: Polyamine aminopropyltransferase (312 aa).

The PABS domain occupies 7–247 (FFWVQEYFTP…GPLGFALAAQ (241 aa)). Position 36 (Q36) interacts with S-methyl-5'-thioadenosine. The spermidine site is built by H67 and E95. Residues D115 and 147 to 148 (DA) contribute to the S-methyl-5'-thioadenosine site. D165 acts as the Proton acceptor in catalysis. An S-methyl-5'-thioadenosine-binding site is contributed by P174.

This sequence belongs to the spermidine/spermine synthase family. In terms of assembly, homodimer or homotetramer.

It localises to the cytoplasm. The enzyme catalyses S-adenosyl 3-(methylsulfanyl)propylamine + putrescine = S-methyl-5'-thioadenosine + spermidine + H(+). It functions in the pathway amine and polyamine biosynthesis; spermidine biosynthesis; spermidine from putrescine: step 1/1. Catalyzes the irreversible transfer of a propylamine group from the amino donor S-adenosylmethioninamine (decarboxy-AdoMet) to putrescine (1,4-diaminobutane) to yield spermidine. The polypeptide is Polyamine aminopropyltransferase (Synechococcus sp. (strain JA-2-3B'a(2-13)) (Cyanobacteria bacterium Yellowstone B-Prime)).